A 382-amino-acid polypeptide reads, in one-letter code: Lipid-A-disaccharide synthase (382 aa).

Belongs to the LpxB family.

The catalysed reaction is 2-N,3-O-bis[(3R)-3-hydroxytetradecanoyl]-alpha-D-glucosaminyl 1-phosphate + UDP-2-N,3-O-bis[(3R)-3-hydroxytetradecanoyl]-alpha-D-glucosamine = lipid A disaccharide (E. coli) + UDP + H(+). It catalyses the reaction a lipid X + a UDP-2-N,3-O-bis[(3R)-3-hydroxyacyl]-alpha-D-glucosamine = a lipid A disaccharide + UDP + H(+). It functions in the pathway glycolipid biosynthesis; lipid IV(A) biosynthesis; lipid IV(A) from (3R)-3-hydroxytetradecanoyl-[acyl-carrier-protein] and UDP-N-acetyl-alpha-D-glucosamine: step 5/6. Functionally, condensation of UDP-2,3-diacylglucosamine and 2,3-diacylglucosamine-1-phosphate to form lipid A disaccharide, a precursor of lipid A, a phosphorylated glycolipid that anchors the lipopolysaccharide to the outer membrane of the cell. This chain is Lipid-A-disaccharide synthase, found in Escherichia coli O8 (strain IAI1).